We begin with the raw amino-acid sequence, 1093 residues long: Non-canonical non-ribosomal peptide synthetase ascB (1093 aa).

Positions 1–26 are enriched in low complexity; sequence MTVNGHHTNGVNGANGTNGHANGSNG. The interval 1–27 is disordered; it reads MTVNGHHTNGVNGANGTNGHANGSNGI. Residues 35–392 form an adenylation (A) domain region; sequence EIVPFVKPQV…LSLTFAPTDN (358 aa). One can recognise a Carrier domain in the interval 591 to 678; sequence DNLEQNLKSL…EIAAALTKGS (88 aa). The residue at position 627 (Ser-627) is an O-(pantetheine 4'-phosphoryl)serine. Residues 721–971 are thioester reductase (TR) domain; the sequence is LTGATGSLGS…IPVDDAASTV (251 aa).

Belongs to the NRP synthetase family.

It catalyses the reaction ilicicolinate B + AH2 + ATP = ilicicolin B + A + AMP + diphosphate. It participates in secondary metabolite biosynthesis; terpenoid biosynthesis. Functionally, non-canonical non-ribosomal peptide synthetase; part of the asc-1 gene cluster that mediates the biosynthesis of both ascochlorin and ascofuranone, a strong inhibitor of cyanide-insensitive alternative oxidases and a promising drug candidate against African trypanosomiasis. The first step in the pathway is performed by the non-reducing polyketide synthase ascC that produces orsellinic acid by condensing acetyl-CoA with 3 malonyl-CoA units. Orsellinic acid is then prenylated by the prenyltransferase ascA to yield ilicicolinic acid B. Ilicicolinic acid B is further reduced to ilicicolin B by the reductase ascB. The halogenase ascD then chlorinates ilicicolin B to produce ilicicolin A which is converted to ilicicolin A epoxide by the cytochrome P450 monooxygenase ascE that catalyzes stereoselective epoxidation of the terminal double bond of the prenyl group. Ilicicolin A epoxide is the last common precursor for the biosynthesis of ascofuranone and ascochlorin. The terpene cyclase ascF produces a monocyclic terpene, and the cyclization reaction is proposed to be initiated by protonation of the terminal epoxide of ilicicolin A epoxide to generate a monocyclic tertiarycation, which is followed by a series of hydride and methyl shifts with abstraction of proton, leading to the formation of the (14S,15R,19R)-trimethylcyclohexanone ring structure of ilicicolin C, which is finally reduced to ascochlorin by the dehydrogenase ascG. On the other hand, ilicicolin A epoxide is hydroxylated by the cytochrome P450 monooxygenase ascH, and the resultant product is cyclized by the terpene cyclase ascI to ascofuranol via protonation-initiated epoxide ring opening, which facilitates the 6-endo-tet cyclization to form the tetrahy-drofuran ring. Finally, ascofuranol is oxidized into ascofuranone by ascJ. This chain is Non-canonical non-ribosomal peptide synthetase ascB, found in Acremonium egyptiacum (Oospora egyptiaca).